A 155-amino-acid chain; its full sequence is Aspartate carbamoyltransferase regulatory chain (155 aa).

Zn(2+) contacts are provided by Cys113, Cys118, Cys141, and Cys144.

This sequence belongs to the PyrI family. As to quaternary structure, contains catalytic and regulatory chains. Requires Zn(2+) as cofactor.

Functionally, involved in allosteric regulation of aspartate carbamoyltransferase. The protein is Aspartate carbamoyltransferase regulatory chain of Methanococcus aeolicus (strain ATCC BAA-1280 / DSM 17508 / OCM 812 / Nankai-3).